Here is a 153-residue protein sequence, read N- to C-terminus: Myosin regulatory light chain, smooth muscle (153 aa).

EF-hand domains lie at Ser-12–Gly-47, Asp-81–Arg-116, and Phe-117–Glu-152. Asp-25, Asn-27, Asp-29, and Asp-36 together coordinate Ca(2+).

In molluscan muscle, calcium regulation is associated with myosin rather than with actin. Muscle myosin contains two types of light chains: the catalytic light chain, essential for ATPase activity, and the regulatory light chain, a calcium-binding protein responsible for Ca(2+) dependent binding and Ca(2+) dependent Mg-ATPase activity. The protein is Myosin regulatory light chain, smooth muscle of Halocynthia roretzi (Sea squirt).